Consider the following 114-residue polypeptide: RNA polymerase-binding protein RbpA (114 aa).

It belongs to the RNA polymerase-binding protein RbpA family. In terms of assembly, monomer. Forms a complex with the RNAP catalytic core, specifically with the beta subunit (RpoB); its binding site may overlap with that of Rif. May bind free principal sigma factors.

Binds to RNA polymerase (RNAP), probably stimulating transcriptions from principal, but not alternative sigma factor promoters. Partially restores transcription in the presence of rifampicin (Rif) in vitro; overexpression leads to an increase in the Rif tolerance in vivo, with smaller colonies. Seems to act by removing Rif from its binding site and preventing its further binding. No longer stimulates transcription in Rif-resistant RNA polymerase (with mutations in rpoB). This is RNA polymerase-binding protein RbpA from Mycolicibacterium smegmatis (strain ATCC 700084 / mc(2)155) (Mycobacterium smegmatis).